Consider the following 378-residue polypeptide: Erythronate-4-phosphate dehydrogenase (378 aa).

Substrate contacts are provided by Ser45 and Thr66. NAD(+) is bound by residues Asp146 and Thr175. Arg208 is an active-site residue. Asp232 contacts NAD(+). Residue Glu237 is part of the active site. The Proton donor role is filled by His254. Gly257 contributes to the NAD(+) binding site. Tyr258 is a binding site for substrate.

This sequence belongs to the D-isomer specific 2-hydroxyacid dehydrogenase family. PdxB subfamily. Homodimer.

It localises to the cytoplasm. The enzyme catalyses 4-phospho-D-erythronate + NAD(+) = (R)-3-hydroxy-2-oxo-4-phosphooxybutanoate + NADH + H(+). It participates in cofactor biosynthesis; pyridoxine 5'-phosphate biosynthesis; pyridoxine 5'-phosphate from D-erythrose 4-phosphate: step 2/5. Its function is as follows. Catalyzes the oxidation of erythronate-4-phosphate to 3-hydroxy-2-oxo-4-phosphonooxybutanoate. The polypeptide is Erythronate-4-phosphate dehydrogenase (Escherichia coli O7:K1 (strain IAI39 / ExPEC)).